We begin with the raw amino-acid sequence, 466 residues long: Adenosylhomocysteinase (466 aa).

Substrate-binding residues include threonine 57, aspartate 132, and glutamate 192. NAD(+) is bound at residue 193–195; the sequence is TTT. Residues lysine 222 and aspartate 226 each coordinate substrate. Residues asparagine 227, 256–261, glutamate 279, asparagine 314, 335–337, and asparagine 380 contribute to the NAD(+) site; these read GYGDVG and IGH.

Belongs to the adenosylhomocysteinase family. NAD(+) is required as a cofactor.

The protein localises to the cytoplasm. The enzyme catalyses S-adenosyl-L-homocysteine + H2O = L-homocysteine + adenosine. It participates in amino-acid biosynthesis; L-homocysteine biosynthesis; L-homocysteine from S-adenosyl-L-homocysteine: step 1/1. Its function is as follows. May play a key role in the regulation of the intracellular concentration of adenosylhomocysteine. The chain is Adenosylhomocysteinase from Rhizobium meliloti (strain 1021) (Ensifer meliloti).